The chain runs to 212 residues: Thymidylate kinase (212 aa).

Residue 10 to 17 (GLEGAGKT) coordinates ATP.

This sequence belongs to the thymidylate kinase family.

It catalyses the reaction dTMP + ATP = dTDP + ADP. In terms of biological role, phosphorylation of dTMP to form dTDP in both de novo and salvage pathways of dTTP synthesis. The chain is Thymidylate kinase from Yersinia enterocolitica serotype O:8 / biotype 1B (strain NCTC 13174 / 8081).